The primary structure comprises 453 residues: Tyrosine-protein phosphatase non-receptor type 18 (453 aa).

The region spanning 26-291 (LAREFSDIKA…RFLYHTVAQL (266 aa)) is the Tyrosine-protein phosphatase domain. Substrate contacts are provided by residues D197, 229–235 (CSAGCGR), and Q276. C229 functions as the Phosphocysteine intermediate in the catalytic mechanism. Phosphotyrosine is present on residues Y381 and Y419. Residues 384–453 (VAPRAQRPVA…RDPPAEWTRV (70 aa)) are disordered. The segment covering 442-453 (GPRDPPAEWTRV) has biased composition (basic and acidic residues).

Belongs to the protein-tyrosine phosphatase family. Non-receptor class 4 subfamily. As to quaternary structure, interacts with PSTPIP1. As to expression, highest expression in bone marrow. Also expressed in kidney, lung, ovary, spleen, thymus and lymph node.

It localises to the nucleus. It is found in the cytoplasm. The catalysed reaction is O-phospho-L-tyrosyl-[protein] + H2O = L-tyrosyl-[protein] + phosphate. Functionally, may be involved in growth and differentiation of hematopoietic cells. The chain is Tyrosine-protein phosphatase non-receptor type 18 (Ptpn18) from Mus musculus (Mouse).